The following is a 528-amino-acid chain: Ribonuclease Y (528 aa).

A helical transmembrane segment spans residues 15–35 (SLLVFALICGSIIGYFLYSFF). The region spanning 217–277 (NISVVNIPNE…IRREIAKKTL (61 aa)) is the KH domain. The HD domain maps to 343–436 (VLKHSLEVAF…VAIADTLSSA (94 aa)).

It belongs to the RNase Y family.

The protein resides in the cell membrane. Endoribonuclease that initiates mRNA decay. The protein is Ribonuclease Y of Onion yellows phytoplasma (strain OY-M).